Consider the following 594-residue polypeptide: Zinc finger protein 467 (594 aa).

The disordered stretch occupies residues 1–70 (MRETLEALNS…HTEQAEAPCM (70 aa)). Lys-97 participates in a covalent cross-link: Glycyl lysine isopeptide (Lys-Gly) (interchain with G-Cter in SUMO2). C2H2-type zinc fingers lie at residues 160–182 (YGCEECERRFRDQLTLRLHQRLH), 188–210 (CACPDCGRSFTQRAHMLLHQRSH), 216–238 (FPCSECDKRFSKKAHLTRHLRTH), 244–266 (YPCAECGKRFSQKIHLGSHQKTH), 272–294 (FPCTECEKRFRKKTHLIRHQRIH), 300–322 (YQCTQCTRSFTHKQHLVRHQRVH), 355–377 (FACSHCGQSFGWKKNLATHQSLH), 430–452 (FFCPDCGRGFAHGQHLARHRRVH), 458–480 (FACAQCGRRFGSRPNLVAHSRAH), 486–508 (FACAQCGRRFSRKSHLGRHQAVH), 514–536 (HACAVCARCFSSKTNLVRHQAIH), and 542–564 (FSCPQCAKSFSRKTHLVRHQRIH). Positions 313–350 (QHLVRHQRVHDAASRTRSSPDIPATPHPPTASLAPSPT) are disordered. Lys-368 is covalently cross-linked (Glycyl lysine isopeptide (Lys-Gly) (interchain with G-Cter in SUMO2)).

Belongs to the krueppel C2H2-type zinc-finger protein family. As to quaternary structure, interacts with STAT3. Enhances STAT3 activity by keeping it in the nucleus.

Its subcellular location is the nucleus. Transcription factor that promotes adipocyte differentiation and suppresses osteoblast differentiation in the bone marrow. Enhances the osteoclast-supporting ability of stromal cells. Binds with STAT3 the consensus sequence 5'-CTTCTGGGAAGA-3' of the acute phase response element (APRE). Transactivates several promoters including FOS, OSM and PPARG. Recruits a histone deacetylase complex. The protein is Zinc finger protein 467 (Znf467) of Rattus norvegicus (Rat).